The following is a 406-amino-acid chain: Peptide transporter imqD (406 aa).

The disordered stretch occupies residues 1–25; sequence MTAPADSTEKSETSETTTLQTTEVS. Over residues 14–25 the composition is skewed to low complexity; it reads SETTTLQTTEVS. 6 helical membrane passes run 184 to 204, 220 to 240, 262 to 282, 309 to 329, 344 to 364, and 373 to 393; these read GLVACRVILGFILFFTCLSQA, IPNDTITAMNPIFCVIMGPVI, ATGFIMMSASMAFAAGVQKII, VFLQTPTYIILAVAEIFSFVT, AVVQALGQLGAAAGSAIGIAI, and LIWMYTGLAVAMFLVAVVFWI.

The protein belongs to the major facilitator superfamily. Proton-dependent oligopeptide transporter (POT/PTR) (TC 2.A.17) family.

The protein localises to the membrane. In terms of biological role, peptide transporter; part of the gene cluster that mediates the biosynthesis of imizoquins A to D, tripeptide-derived alkaloids that serve a protective role against oxidative stress that are essential for normal germination. This chain is Peptide transporter imqD, found in Aspergillus flavus (strain ATCC 200026 / FGSC A1120 / IAM 13836 / NRRL 3357 / JCM 12722 / SRRC 167).